Consider the following 118-residue polypeptide: HTH-type transcriptional regulator SarT (118 aa).

The H-T-H motif DNA-binding region spans Met-55–Lys-78.

The protein belongs to the SarA family.

It localises to the cytoplasm. In terms of biological role, transcriptional regulator acting as an intermediary between major regulators SarA and agr and virulence genes. Represses alpha-hemolysin (hla) gene expression. This is HTH-type transcriptional regulator SarT (sarT) from Staphylococcus aureus (strain Mu50 / ATCC 700699).